The chain runs to 541 residues: Protein yellow (541 aa).

The N-terminal stretch at 1 to 21 (MFQDKGWILVTLITLVTPSWA) is a signal peptide. N-linked (GlcNAc...) asparagine glycans are attached at residues N144 and N215. The tract at residues 443–463 (QKPQTSWASSPPPPSRTYLPA) is disordered.

Belongs to the major royal jelly protein family.

It localises to the secreted. Functionally, controls the pigmentation pattern of the adult cuticle and larval mouth parts. The protein is Protein yellow (y) of Drosophila mauritiana (Fruit fly).